A 611-amino-acid chain; its full sequence is Dolabella-3,7-dien-18-ol synthase TPS06 (611 aa).

Mg(2+)-binding residues include aspartate 363, aspartate 367, aspartate 507, threonine 511, and glutamate 515. Residues 363-367 (DNTFD) carry the DDXXD motif; degenerate motif.

Belongs to the terpene synthase family. Tpsa subfamily. Requires Mg(2+) as cofactor. The cofactor is Mn(2+). In terms of tissue distribution, predominantly expressed in flowers but also in stems, siliques, roots and leaves.

The protein localises to the cytoplasm. The enzyme catalyses (2E,6E,10E)-geranylgeranyl diphosphate + H2O = (3E,7E)-dolabella-3,7-dien-18-ol + diphosphate. The protein operates within secondary metabolite biosynthesis; terpenoid biosynthesis. In terms of biological role, involved in terpene biosynthesis in roots. Possesses sesquiterpene (C15) synthase activity and diterpene (C20) synthase activity in vitro. Possesses dolabella-3,7-dien-18-ol synthase activity in vitro. Catalyzes the formation of dolabella-3,7-dien-18-ol from geranylgeranyl diphosphate. The chain is Dolabella-3,7-dien-18-ol synthase TPS06 from Arabidopsis thaliana (Mouse-ear cress).